We begin with the raw amino-acid sequence, 389 residues long: Chalcone synthase 3 (389 aa).

Cys-164 is a catalytic residue.

It belongs to the thiolase-like superfamily. Chalcone/stilbene synthases family.

It carries out the reaction (E)-4-coumaroyl-CoA + 3 malonyl-CoA + 3 H(+) = 2',4,4',6'-tetrahydroxychalcone + 3 CO2 + 4 CoA. It participates in secondary metabolite biosynthesis; flavonoid biosynthesis. In terms of biological role, the primary product of this enzyme is 4,2',4',6'-tetrahydroxychalcone (also termed naringenin-chalcone or chalcone) which can under specific conditions spontaneously isomerize into naringenin. The sequence is that of Chalcone synthase 3 (CHS3) from Pisum sativum (Garden pea).